Reading from the N-terminus, the 117-residue chain is UPF0342 protein GWCH70_0629 (117 aa).

The protein belongs to the UPF0342 family.

This chain is UPF0342 protein GWCH70_0629, found in Geobacillus sp. (strain WCH70).